Here is a 256-residue protein sequence, read N- to C-terminus: Imidazole glycerol phosphate synthase subunit HisF (256 aa).

Residues D12 and D131 contribute to the active site.

Belongs to the HisA/HisF family. Heterodimer of HisH and HisF.

Its subcellular location is the cytoplasm. It carries out the reaction 5-[(5-phospho-1-deoxy-D-ribulos-1-ylimino)methylamino]-1-(5-phospho-beta-D-ribosyl)imidazole-4-carboxamide + L-glutamine = D-erythro-1-(imidazol-4-yl)glycerol 3-phosphate + 5-amino-1-(5-phospho-beta-D-ribosyl)imidazole-4-carboxamide + L-glutamate + H(+). Its pathway is amino-acid biosynthesis; L-histidine biosynthesis; L-histidine from 5-phospho-alpha-D-ribose 1-diphosphate: step 5/9. Its function is as follows. IGPS catalyzes the conversion of PRFAR and glutamine to IGP, AICAR and glutamate. The HisF subunit catalyzes the cyclization activity that produces IGP and AICAR from PRFAR using the ammonia provided by the HisH subunit. This is Imidazole glycerol phosphate synthase subunit HisF from Thermobifida fusca (strain YX).